Reading from the N-terminus, the 572-residue chain is Moesin/ezrin/radixin homolog 1 (572 aa).

Positions 1–291 (MNVRVTTMDA…GNHELYMRRR (291 aa)) constitute an FERM domain. The tract at residues 456–491 (TTTPSHHHVEEEEEMDNEEELVNGENGNQDFSKDFD) is disordered. Acidic residues predominate over residues 466–477 (EEEEMDNEEELV). Position 553 is a phosphothreonine (T553).

In terms of assembly, interacts with cytoskeletal actin.

The protein localises to the cell junction. It localises to the adherens junction. Its subcellular location is the cell projection. The protein resides in the microvillus. It is found in the rhabdomere. The protein localises to the cell membrane. It localises to the cytoplasm. Its subcellular location is the cytoskeleton. Its function is as follows. Involved in connections of major cytoskeletal structures to the plasma membrane. The chain is Moesin/ezrin/radixin homolog 1 from Culex quinquefasciatus (Southern house mosquito).